We begin with the raw amino-acid sequence, 348 residues long: MDEWLAEFIKRTILKLPFSETATILKTWGFLTESELQTFTLRYPKEVTATEVVRFCEARNATLDHAAALDLVFNHAYSNKKTWTVYQMSKRLESENDLFDASEFKLQFKKSIHAVSKNVTINFKEFGEALWIRIAWGTHNSRPNQYKATFAVYHSQTPYVFITGLGKACQPLMCQALVIASKYSQIQEMELKSRCLESLKDIVFKRFNQPFSSHHSKPHEKALTPNIVDPRVTYENMREKDRVYHLTCETFGEGPLPKLELASYKLETMFKADSAMSGNLTAVNEPFRCVVKFSSPHLLEAIRSLAPAGIAEAPISTLLSCIPHKARNSFKITEKRSMHPSSSQPTNV.

The protein belongs to the CENP-N/CHL4 family.

It is found in the nucleus. The protein localises to the chromosome. The protein resides in the centromere. Its function is as follows. Probable component of a centromeric complex involved in assembly of kinetochore proteins, mitotic progression and chromosome segregation. This chain is Centromere protein N-B (cenpn-b), found in Xenopus laevis (African clawed frog).